Reading from the N-terminus, the 765-residue chain is Probable ATP-dependent RNA helicase DDX27 (765 aa).

3 positions are modified to phosphoserine: Ser-23, Ser-25, and Ser-48. Residues Leu-43–Thr-63 show a composition bias toward acidic residues. Disordered regions lie at residues Leu-43 to Ala-83 and Lys-111 to Asp-179. Positions Phe-55 to Phe-57 match the Required for interaction with the PEBOW complex motif. The segment covering Glu-129–Asp-156 has biased composition (basic and acidic residues). Phosphoserine is present on residues Ser-135 and Ser-146. Residues Thr-157–Glu-172 are compositionally biased toward acidic residues. A Nuclear localization signal motif is present at residues Lys-164–Lys-169. Residues Leu-187–Lys-215 carry the Q motif motif. The 175-residue stretch at Ile-218–Ile-392 folds into the Helicase ATP-binding domain. Ala-231–Thr-238 contacts ATP. Residues Asp-340–Asp-343 carry the DEAD box motif. Positions Leu-426–Ile-572 constitute a Helicase C-terminal domain. Positions Val-716–Ser-725 are enriched in basic residues.

It belongs to the DEAD box helicase family. DDX27/DRS1 subfamily. In terms of assembly, associates with PeBoW complex, composed of BOP1, PES1 and WDR12. Interacts directly with BOP1 and PES1.

The protein localises to the nucleus. It is found in the nucleolus. It localises to the chromosome. The catalysed reaction is ATP + H2O = ADP + phosphate + H(+). In terms of biological role, probable ATP-dependent RNA helicase. Component of the nucleolar ribosomal RNA (rRNA) processing machinery that regulates 3' end formation of ribosomal 47S rRNA. This chain is Probable ATP-dependent RNA helicase DDX27 (DDX27), found in Homo sapiens (Human).